The primary structure comprises 114 residues: Transcription initiation factor IIA subunit 2 (114 aa).

This sequence belongs to the TFIIA subunit 2 family. In terms of assembly, TFIIA is a heterodimer composed of the large toa1 and the small toa2 subunits.

The protein resides in the nucleus. In terms of biological role, TFIIA is a component of the transcription machinery of RNA polymerase II and plays an important role in transcriptional activation. TFIIA in a complex with tbp mediates transcriptional activity. The sequence is that of Transcription initiation factor IIA subunit 2 (toa2) from Fusarium vanettenii (strain ATCC MYA-4622 / CBS 123669 / FGSC 9596 / NRRL 45880 / 77-13-4) (Fusarium solani subsp. pisi).